Reading from the N-terminus, the 164-residue chain is PTS system sorbose-specific EIIB component (164 aa).

Residues 1–164 (MQITLARIDD…DKINETAFCE (164 aa)) form the PTS EIIB type-4 domain. The Pros-phosphohistidine intermediate role is filled by H14. At H14 the chain carries Phosphohistidine; by EIIA.

In terms of assembly, dimer of dimers.

It localises to the cytoplasm. It catalyses the reaction keto-L-sorbose(out) + N(pros)-phospho-L-histidyl-[protein] = L-sorbose 1-phosphate(in) + L-histidyl-[protein]. Its function is as follows. The phosphoenolpyruvate-dependent sugar phosphotransferase system (PTS), a major carbohydrate active transport system, catalyzes the phosphorylation of incoming sugar substrates concomitant with their translocation across the cell membrane. The enzyme II SorABFM PTS system is involved in L-sorbose transport. This is PTS system sorbose-specific EIIB component from Klebsiella pneumoniae.